Consider the following 411-residue polypeptide: LL-diaminopimelate aminotransferase 1 (411 aa).

2 residues coordinate substrate: Y15 and G42. Pyridoxal 5'-phosphate contacts are provided by residues Y72, S108–K109, Y132, N187, Y218, and S246–S248. The substrate site is built by K109, Y132, and N187. The residue at position 249 (K249) is an N6-(pyridoxal phosphate)lysine. Pyridoxal 5'-phosphate-binding residues include R257 and N292. N292 and R388 together coordinate substrate.

It belongs to the class-I pyridoxal-phosphate-dependent aminotransferase family. LL-diaminopimelate aminotransferase subfamily. As to quaternary structure, homodimer. Requires pyridoxal 5'-phosphate as cofactor.

It carries out the reaction (2S,6S)-2,6-diaminopimelate + 2-oxoglutarate = (S)-2,3,4,5-tetrahydrodipicolinate + L-glutamate + H2O + H(+). Its pathway is amino-acid biosynthesis; L-lysine biosynthesis via DAP pathway; LL-2,6-diaminopimelate from (S)-tetrahydrodipicolinate (aminotransferase route): step 1/1. Involved in the synthesis of meso-diaminopimelate (m-DAP or DL-DAP), required for both lysine and peptidoglycan biosynthesis. Catalyzes the direct conversion of tetrahydrodipicolinate to LL-diaminopimelate. The protein is LL-diaminopimelate aminotransferase 1 of Nostoc sp. (strain PCC 7120 / SAG 25.82 / UTEX 2576).